Reading from the N-terminus, the 35-residue chain is Dermonecrotic toxin LdSicTox-alpha-1 (35 aa).

His11 is an active-site residue. 2 residues coordinate Mg(2+): Glu31 and Asp33.

This sequence belongs to the arthropod phospholipase D family. Class I subfamily. Mg(2+) serves as cofactor. Post-translationally, contains 1 disulfide bond. Expressed by the venom gland.

The protein localises to the secreted. The enzyme catalyses an N-(acyl)-sphingosylphosphocholine = an N-(acyl)-sphingosyl-1,3-cyclic phosphate + choline. It carries out the reaction an N-(acyl)-sphingosylphosphoethanolamine = an N-(acyl)-sphingosyl-1,3-cyclic phosphate + ethanolamine. It catalyses the reaction a 1-acyl-sn-glycero-3-phosphocholine = a 1-acyl-sn-glycero-2,3-cyclic phosphate + choline. The catalysed reaction is a 1-acyl-sn-glycero-3-phosphoethanolamine = a 1-acyl-sn-glycero-2,3-cyclic phosphate + ethanolamine. Dermonecrotic toxins cleave the phosphodiester linkage between the phosphate and headgroup of certain phospholipids (sphingolipid and lysolipid substrates), forming an alcohol (often choline) and a cyclic phosphate. This toxin acts on sphingomyelin (SM). It may also act on ceramide phosphoethanolamine (CPE), lysophosphatidylcholine (LPC) and lysophosphatidylethanolamine (LPE), but not on lysophosphatidylserine (LPS), and lysophosphatidylglycerol (LPG). It acts by transphosphatidylation, releasing exclusively cyclic phosphate products as second products. Induces dermonecrosis, hemolysis, increased vascular permeability, edema, inflammatory response, and platelet aggregation. The protein is Dermonecrotic toxin LdSicTox-alpha-1 of Loxosceles deserta (Desert recluse spider).